The sequence spans 149 residues: uncharacterized protein (149 aa).

2 helical membrane-spanning segments follow: residues I91–Y111 and I122–L142.

The protein localises to the membrane. This is an uncharacterized protein from Dictyostelium discoideum (Social amoeba).